The primary structure comprises 442 residues: Histidine--tRNA ligase (442 aa).

This sequence belongs to the class-II aminoacyl-tRNA synthetase family. As to quaternary structure, homodimer.

The protein resides in the cytoplasm. The enzyme catalyses tRNA(His) + L-histidine + ATP = L-histidyl-tRNA(His) + AMP + diphosphate + H(+). The polypeptide is Histidine--tRNA ligase (Psychrobacter arcticus (strain DSM 17307 / VKM B-2377 / 273-4)).